We begin with the raw amino-acid sequence, 218 residues long: Fucoxanthin-chlorophyll a-c binding protein, chloroplastic (218 aa).

The N-terminal 36 residues, 1 to 36, are a transit peptide targeting the chloroplast; that stretch reads MFYSAAVAALMVGSASAFLAPAQFNSVAKSSGALSM.

Belongs to the fucoxanthin chlorophyll protein family. As to quaternary structure, the LHC complex of chromophytic algae is composed of fucoxanthin, chlorophyll A and C bound non-covalently by fucoxanthin chlorophyll proteins (FCPs). The ratio of pigments in this LHC is; fucoxanthin: chlorophyll C: chlorophyll A; (0.6-1): (0.1-0.3): (1).

The protein resides in the plastid. It localises to the chloroplast thylakoid membrane. The light-harvesting complex (LHC) functions as a light receptor, it captures and delivers excitation energy to photosystems with which it is closely associated. Energy is transferred from the carotenoid and chlorophyll C (or B) to chlorophyll A and the photosynthetic reaction centers where it is used to synthesize ATP and reducing power. In Chattonella marina var. antiqua (Red tide flagellate), this protein is Fucoxanthin-chlorophyll a-c binding protein, chloroplastic.